We begin with the raw amino-acid sequence, 89 residues long: uncharacterized protein (89 aa).

A disordered region spans residues 31 to 89; it reads TPQPLEPHEHPKPMEPNEFDPKPDDPPRNPDPSPFPNEVPKPKPSDFPIPDELYPQPIV. The segment covering 36-58 has biased composition (basic and acidic residues); the sequence is EPHEHPKPMEPNEFDPKPDDPPR. Over residues 59–69 the composition is skewed to pro residues; it reads NPDPSPFPNEV.

This is an uncharacterized protein from Dictyostelium discoideum (Social amoeba).